We begin with the raw amino-acid sequence, 1648 residues long: Histone transcription regulator 3 (1648 aa).

2 disordered regions span residues 301–371 (NTPS…EQEN) and 1597–1630 (DVNDENNPALPSSGSVTSKSTPDPTSKPSAIKKR). Thr-302 carries the phosphothreonine modification. Position 304 is a phosphoserine (Ser-304). The segment covering 339–353 (EEARPNKRTDEHIDS) has biased composition (basic and acidic residues). Polar residues predominate over residues 1597-1610 (DVNDENNPALPSSG). A compositionally biased stretch (low complexity) spans 1611–1625 (SVTSKSTPDPTSKPS).

It belongs to the HIR3 family. In terms of assembly, component of the HIR complex, composed of HIR1, HIR2, HIR3 and HPC2. This complex may consist of one copy of HIR1 and HIR3 and two copies of HIR2 and HPC2. The HIR complex interacts with ASF1. Interacts with RTT106.

It localises to the nucleus. The protein localises to the chromosome. HIR1, HIR2 and HIR3 are repressors of histone gene transcription. They are required for the periodic repression of three of the four histone gene loci during cell cycle as well as for autogenous regulation of the HTA1-HTB1 locus by H2A and H2B. Also has a role in nucleosome assembly. The chain is Histone transcription regulator 3 (HIR3) from Saccharomyces cerevisiae (strain ATCC 204508 / S288c) (Baker's yeast).